Here is a 242-residue protein sequence, read N- to C-terminus: Ubiquinone biosynthesis O-methyltransferase (242 aa).

Residues R44, G64, D85, and M129 each coordinate S-adenosyl-L-methionine.

Belongs to the methyltransferase superfamily. UbiG/COQ3 family.

The catalysed reaction is a 3-demethylubiquinol + S-adenosyl-L-methionine = a ubiquinol + S-adenosyl-L-homocysteine + H(+). The enzyme catalyses a 3-(all-trans-polyprenyl)benzene-1,2-diol + S-adenosyl-L-methionine = a 2-methoxy-6-(all-trans-polyprenyl)phenol + S-adenosyl-L-homocysteine + H(+). It functions in the pathway cofactor biosynthesis; ubiquinone biosynthesis. O-methyltransferase that catalyzes the 2 O-methylation steps in the ubiquinone biosynthetic pathway. This chain is Ubiquinone biosynthesis O-methyltransferase, found in Klebsiella pneumoniae subsp. pneumoniae (strain ATCC 700721 / MGH 78578).